Reading from the N-terminus, the 68-residue chain is Conotoxin Cal12.1p1 (68 aa).

A propeptide spanning residues 1-23 (DLITNSYTRGKPRHVTSWRNLRT) is cleaved from the precursor.

In terms of processing, contains 4 disulfide bonds. As to expression, expressed by the venom duct.

It is found in the secreted. In Californiconus californicus (California cone), this protein is Conotoxin Cal12.1p1.